Consider the following 359-residue polypeptide: Opine dehydrogenase (359 aa).

It belongs to the lysopine/nopaline/octopine/opine/vitopine dehydrogenases family. As to quaternary structure, homodimer.

The enzyme catalyses (2S)-2-[(R)-1-carboxyethylamino]pentanoate + NAD(+) + H2O = L-2-aminopentanoate + pyruvate + NADH + H(+). In terms of biological role, in the forward direction also acts on secondary amine dicarboxylates such as N-(1-carboxyethyl)methionine and N-(1-carboxyethyl)phenylalanine. In the reverse direction, the enzyme also acts on neutral amino acids as an amino donor. They include L-amino acids such as 2-aminopentanoic acid, 2-aminobutyric acid, 2-aminohexanoic acid, 3-chloroalanine, O-acetylserine, methionine, isoleucine, valine, phenylalanine, leucine and alanine. The sequence is that of Opine dehydrogenase (odh) from Arthrobacter sp. (strain 1C).